We begin with the raw amino-acid sequence, 140 residues long: Putative pre-16S rRNA nuclease (140 aa).

Belongs to the YqgF nuclease family.

The protein localises to the cytoplasm. Functionally, could be a nuclease involved in processing of the 5'-end of pre-16S rRNA. The chain is Putative pre-16S rRNA nuclease from Yersinia enterocolitica serotype O:8 / biotype 1B (strain NCTC 13174 / 8081).